A 243-amino-acid chain; its full sequence is Small ribosomal subunit protein uS3 (243 aa).

One can recognise a KH type-2 domain in the interval 39 to 107 (LRKLISKELQ…KIKLNIKEIH (69 aa)). Residues 212–243 (VAKSPAEPATTAPTPAPERRERQPRRNSNASA) are disordered.

The protein belongs to the universal ribosomal protein uS3 family. In terms of assembly, part of the 30S ribosomal subunit. Forms a tight complex with proteins S10 and S14.

Functionally, binds the lower part of the 30S subunit head. Binds mRNA in the 70S ribosome, positioning it for translation. This Chloroflexus aurantiacus (strain ATCC 29364 / DSM 637 / Y-400-fl) protein is Small ribosomal subunit protein uS3.